A 111-amino-acid chain; its full sequence is Large ribosomal subunit protein uL22 (111 aa).

The protein belongs to the universal ribosomal protein uL22 family. Part of the 50S ribosomal subunit.

Its function is as follows. This protein binds specifically to 23S rRNA; its binding is stimulated by other ribosomal proteins, e.g. L4, L17, and L20. It is important during the early stages of 50S assembly. It makes multiple contacts with different domains of the 23S rRNA in the assembled 50S subunit and ribosome. The globular domain of the protein is located near the polypeptide exit tunnel on the outside of the subunit, while an extended beta-hairpin is found that lines the wall of the exit tunnel in the center of the 70S ribosome. The chain is Large ribosomal subunit protein uL22 from Acholeplasma laidlawii (strain PG-8A).